We begin with the raw amino-acid sequence, 63 residues long: Frenatin 1.1 (63 aa).

A signal peptide spans 1–22 (MAFLKKSLFLVLFLGLVSLSIC). The propeptide occupies 23 to 49 (EKEKKEQEDEDENEEEKESEEGSEEKR). The interval 25 to 63 (EKKEQEDEDENEEEKESEEGSEEKRGLLDTLGGILGLGR) is disordered. Over residues 30 to 45 (EDEDENEEEKESEEGS) the composition is skewed to acidic residues. At L61 the chain carries Leucine amide.

In terms of tissue distribution, expressed by the skin glands.

The protein resides in the secreted. Antimicrobial peptide with selective activity. Is only active against Micrococcus luteus (MIC=25 ug/ml) and not against Bacillus cereus, Escherichia coli, Leuconostoc mesenteroides, Micrococcus luteus, Pastewella haemolytica, Staphylococcus aureus, Streptococcus faecalis and Streptococcus uberis. This is Frenatin 1.1 from Nyctimystes infrafrenatus (White-lipped tree frog).